We begin with the raw amino-acid sequence, 360 residues long: GTPase Obg (360 aa).

Residues 1-156 (MFVDSVEIII…KCVRLELKLI (156 aa)) enclose the Obg domain. Residues 157–360 (ADIGLVGFPN…LKFVLLEALP (204 aa)) enclose the OBG-type G domain. GTP is bound by residues 163-170 (GFPNAGKS), 188-192 (FTTLV), 210-213 (DIPG), 279-282 (NKCD), and 341-343 (SAL). S170 and T190 together coordinate Mg(2+).

Belongs to the TRAFAC class OBG-HflX-like GTPase superfamily. OBG GTPase family. As to quaternary structure, monomer. Mg(2+) serves as cofactor.

The protein localises to the cytoplasm. An essential GTPase which binds GTP, GDP and possibly (p)ppGpp with moderate affinity, with high nucleotide exchange rates and a fairly low GTP hydrolysis rate. Plays a role in control of the cell cycle, stress response, ribosome biogenesis and in those bacteria that undergo differentiation, in morphogenesis control. This chain is GTPase Obg, found in Helicobacter pylori (strain Shi470).